Consider the following 292-residue polypeptide: Transcription factor-like protein DPA (292 aa).

The interval 1-25 (MSMEMELFVTPEKQRQHPSVSVEKT) is disordered. The DNA-binding element occupies 51-135 (GGGLRQFSVM…KKEIRWKGLP (85 aa)). Positions 101–135 (NEKNIRRRVYDALNVFMALDIIARDKKEIRWKGLP) match the DEF box motif. Residues 163-184 (LKELREKVSSLESLMSRNQEMV) are a coiled coil. Residues 246-280 (QEQNRVSSSSSTHHQSQHSSAHSSSSSCIASGTSG) form a disordered region. Over residues 252–280 (SSSSSTHHQSQHSSAHSSSSSCIASGTSG) the composition is skewed to low complexity.

It belongs to the E2F/DP family. Heterodimer with E2F. Interacts preferentially with E2FA and E2FB, but also with E2FC. In terms of tissue distribution, strongly expressed in the actively dividing tissues of the shoot apical meristem, young leaf primordia, the vascular tissues of the maturing leaf primordia and axillary buds.

It is found in the cytoplasm. Its subcellular location is the nucleus. In terms of biological role, involved in the regulation of the G1/S transition. Increases the DNA binding and the transactivation activities of E2F proteins after heterodimerization. The complex DPA/E2FA promotes cell division and acts as a regulator of the endocycle. Positively regulates the activity of S phase-specific genes. The protein is Transcription factor-like protein DPA (DPA) of Arabidopsis thaliana (Mouse-ear cress).